A 109-amino-acid polypeptide reads, in one-letter code: Phosphoribosyl-AMP cyclohydrolase (109 aa).

Asp76 lines the Mg(2+) pocket. Cys77 lines the Zn(2+) pocket. Asp78 and Asp80 together coordinate Mg(2+). The Zn(2+) site is built by Cys93 and Cys100.

The protein belongs to the PRA-CH family. As to quaternary structure, homodimer. Requires Mg(2+) as cofactor. Zn(2+) is required as a cofactor.

It localises to the cytoplasm. It catalyses the reaction 1-(5-phospho-beta-D-ribosyl)-5'-AMP + H2O = 1-(5-phospho-beta-D-ribosyl)-5-[(5-phospho-beta-D-ribosylamino)methylideneamino]imidazole-4-carboxamide. The protein operates within amino-acid biosynthesis; L-histidine biosynthesis; L-histidine from 5-phospho-alpha-D-ribose 1-diphosphate: step 3/9. Its function is as follows. Catalyzes the hydrolysis of the adenine ring of phosphoribosyl-AMP. This chain is Phosphoribosyl-AMP cyclohydrolase, found in Streptococcus mutans serotype c (strain ATCC 700610 / UA159).